A 102-amino-acid polypeptide reads, in one-letter code: DET1- and DDB1-associated protein 1 (102 aa).

The interval 67-102 (NAAKKRDQEQVEIEGENSAPPRKIARTDSQDMNEDT) is disordered.

Belongs to the DDA1 family. Component of numerous DCX (DDB1-CUL4-X-box) E3 ubiquitin-protein ligase complexes which consist of a core of DDB1, cullin-4 (CUL4A or CUL4B), DDA1 and RBX1.

The protein operates within protein modification; protein ubiquitination. Its function is as follows. Functions as a component of numerous distinct DCX (DDB1-CUL4-X-box) E3 ubiquitin-protein ligase complexes which mediate the ubiquitination and subsequent proteasomal degradation of target proteins. In the DCX complexes, acts as a scaffolding subunit required to stabilize the complex. This Gallus gallus (Chicken) protein is DET1- and DDB1-associated protein 1.